Here is a 233-residue protein sequence, read N- to C-terminus: Protease inhibitor Egf1.0 (233 aa).

Positions 1–28 are cleaved as a signal peptide; the sequence is MYIDTGIMSNNIFLFAFFALVGLTRIEA. The 53-residue stretch at 52-104 folds into the TIL domain; sequence CRENEHYNSTRIECEEECNDRNNKLCYRFQQFCWCNEGYIRNSSHICVKLEDC. The disordered stretch occupies residues 201–233; it reads FGKPKNSSAEKKPLETETQAQKFNGIIDQETLD.

It belongs to the polydnaviridae EGF-like motif protein family. As to quaternary structure, interacts with host PAP1 and PAP3.

Functionally, counteracts the host humoral immune response by inhibiting the processing and the amidolytic activity of host PAP3. Thereby, melanization of host hemolymph, normally producing several reactive intermediates toxic for viruses, is deregulated and proper immune response cannot occur. In Microplitis demolitor (Parasitoid wasp), this protein is Protease inhibitor Egf1.0 (O12).